The chain runs to 780 residues: MKPGATGESDLAEVLPQHKFDSKSLEAYLNQHLSGFGAEREATLTIAQYRAGKSNPTFYLQKGFQTYVLRKKPPGSLLPKAHQIDREFKVQKALFSIGFPVPKPILYCSDTSVIGTEFYVMEHVQGRIFRDLTIPGLSPAERSAIYVATVETLAQLHSLNIQSLQLEGYGIGAGYCKRQVSTWTKQYQAAAHQDIPAMQQLSEWLMKNLPDNDNEENLIHGDFRLDNIVFHPKECRVIAVLDWELSTIGHPLSDLAHFSLFYFWPRTVPMINQGSYSENSGIPSMEELISIYCRCRGINSILPNWNFFLALSYFKMAGIAQGVYSRYLLGNNSSEDSFLFANIVQPLAETGLQLSKRTFSTVLPQIDTTGQLFVQTRKGQEVLIKVKHFMKQHILPAEKEVTEFYVQNENSVDKWGKPLVIDKLKEMAKVEGLWNLFLPAVSGLSHVDYALIAEETGKCFFAPDVFNCQAPDTGNMEVLHLYGSEEQKKQWLEPLLQGNITSCFCMTEPDVASSDATNIECSIQRDEDSYVINGKKWWSSGAGNPKCKIAIVLGRTQNTSLSRHKQHSMILVPMNTPGVKIIRPLSVFGYTDNFHGGHFEIHFNQVRVPATNLILGEGRGFEISQGRLGPGRIHHCMRTVGLAERALQIMCERATQRIAFKKKLYAHEVVAHWIAESRIAIEKIRLLTLKAAHSMDTLGSAGAKKEIAMIKVAAPRAVSKIVDWAIQVCGGAGVSQDYPLANMYAITRVLRLADGPDEVHLSAIATMELRDQAKRLTAKI.

An N6-acetyllysine modification is found at K177. Y324 bears the Phosphotyrosine mark. K391 bears the N6-succinyllysine mark. Residues 504 to 514 and 538 to 540 contribute to the FAD site; these read FCMTEPDVASS and WSS. S514 is a binding site for substrate. A substrate-binding site is contributed by 629–632; it reads GPGR. FAD is bound by residues R657, Q727, and 727 to 731; that span reads QVCGG. G755 is a binding site for substrate. 756 to 758 lines the FAD pocket; sequence PDE.

It belongs to the acyl-CoA dehydrogenase family. As to quaternary structure, homodimer. FAD serves as cofactor. As to expression, widely expressed with highest levels in brain followed by liver, heart and kidney.

It localises to the peroxisome. Its subcellular location is the mitochondrion membrane. The catalysed reaction is a 2,3-saturated acyl-CoA + oxidized [electron-transfer flavoprotein] + H(+) = a (2E)-enoyl-CoA + reduced [electron-transfer flavoprotein]. It catalyses the reaction docosanoyl-CoA + oxidized [electron-transfer flavoprotein] + H(+) = (2E)-docosenoyl-CoA + reduced [electron-transfer flavoprotein]. The enzyme catalyses tetracosanoyl-CoA + oxidized [electron-transfer flavoprotein] + H(+) = (2E)-tetracosenoyl-CoA + reduced [electron-transfer flavoprotein]. It carries out the reaction eicosanoyl-CoA + oxidized [electron-transfer flavoprotein] + H(+) = (2E)-eicosenoyl-CoA + reduced [electron-transfer flavoprotein]. The catalysed reaction is hexacosanoyl-CoA + oxidized [electron-transfer flavoprotein] + H(+) = (2E)-hexacosenoyl-CoA + reduced [electron-transfer flavoprotein]. It catalyses the reaction tricosanoyl-CoA + oxidized [electron-transfer flavoprotein] + H(+) = (2E)-tricosenoyl-CoA + reduced [electron-transfer flavoprotein]. It participates in lipid metabolism; fatty acid beta-oxidation. In terms of biological role, acyl-CoA dehydrogenase, that exhibits maximal activity towards saturated C22-CoA. Probably participates in beta-oxydation and energy production but could also play a role in the metabolism of specific fatty acids to control fatty acids composition of cellular lipids in brain. This chain is Acyl-CoA dehydrogenase family member 11 (ACAD11), found in Homo sapiens (Human).